The chain runs to 558 residues: Kelch-like protein 23 (558 aa).

Residues 36–104 enclose the BTB domain; sequence TDITLQCPSG…AYTSQIEITK (69 aa). One can recognise a BACK domain in the interval 139–240; the sequence is CIGMHSFAEF…DPVYLKTALG (102 aa). Kelch repeat units follow at residues 274–320, 321–369, 370–416, 418–466, 467–508, and 510–557; these read TMYI…CLGP, NIYV…TLGG, CVYA…VLHD, IYVI…PFEN, KLYL…IMNG, and IYVT…CVYN.

The sequence is that of Kelch-like protein 23 (KLHL23) from Homo sapiens (Human).